Here is an 85-residue protein sequence, read N- to C-terminus: Large ribosomal subunit protein bL27 (85 aa).

The disordered stretch occupies residues 1–20; sequence MAHKKAGGSTRNGRDSEAKR.

Belongs to the bacterial ribosomal protein bL27 family.

In Salmonella agona (strain SL483), this protein is Large ribosomal subunit protein bL27.